The primary structure comprises 543 residues: Excitatory amino acid transporter 1 (543 aa).

Over 1–47 the chain is Cytoplasmic; that stretch reads MTKSNGEEPRMGGRMERLQQGVRKRTLLAKKKVQSLTKEDVKSYLFR. The helical transmembrane segment at 48–68 threads the bilayer; that stretch reads NAFVLLTVTAVIVGTILGFAL. The Extracellular segment spans residues 69-86; the sequence is RPYKMSYREVKYFSFPGE. A helical transmembrane segment spans residues 87-108; that stretch reads LLMRMLQMLVLPLIISSLVTGM. At 109–122 the chain is on the cytoplasmic side; the sequence is AALDSKASGKMGMR. The chain crosses the membrane as a helical span at residues 123 to 145; that stretch reads AVVYYMTTTIIAVVIGIIIVIII. Over 146 to 236 the chain is Extracellular; it reads HPGKGTKENM…IREEMVPVPG (91 aa). N-linked (GlcNAc...) asparagine glycosylation is found at N206 and N216. A helical transmembrane segment spans residues 237-260; it reads SVNGVNALGLVVFSMCFGFVIGNM. Over 261–269 the chain is Cytoplasmic; the sequence is KEQGQALRE. Residues 270–297 traverse the membrane as a helical segment; the sequence is FFDSLNEAIMRLVAVIMWYAPLGILFLI. The Extracellular portion of the chain corresponds to 298 to 318; sequence AGKIVEMEDMGVIGGQLAMYT. The helical transmembrane segment at 319–340 threads the bilayer; sequence VTVIVGLLIHAVIVLPLLYFLV. At 341–345 the chain is on the cytoplasmic side; it reads TRKNP. Positions 346-376 form an intramembrane region, discontinuously helical; sequence WVFIGGLLQALITALGTSSSSATLPITFKCL. 363–365 lines the L-aspartate pocket; the sequence is SSS. The Cytoplasmic portion of the chain corresponds to 377-385; sequence EENNGVDKR. Residues 386–412 traverse the membrane as a helical segment; the sequence is ITRFVLPVGATINMDGTALYEALAAIF. Residues G394, T396, and N398 each contribute to the Na(+) site. T402 is a binding site for L-aspartate. Topologically, residues 413-425 are extracellular; sequence IAQVNNFDLNFGQ. The discontinuously helical intramembrane region spans 426–459; the sequence is IITISITATAASIGAAGIPQAGLVTMVIVLTSVG. 443 to 447 provides a ligand contact to L-aspartate; sequence IPQAG. The Extracellular segment spans residues 460 to 472; the sequence is LPTDDITLIIAVD. The chain crosses the membrane as a helical span at residues 473 to 494; that stretch reads WFLDRLRTTTNVLGDSLGAGIV. 2 residues coordinate L-aspartate: D476 and N483. Residues N483 and D487 each coordinate Na(+). At 495–543 the chain is on the cytoplasmic side; the sequence is EHLSRHELKNRDVEMGNSVIEENEMKKPYQLIAQDNEPEKPVADSETKM. S512 carries the phosphoserine modification. The disordered stretch occupies residues 522–543; the sequence is PYQLIAQDNEPEKPVADSETKM. Basic and acidic residues predominate over residues 531 to 543; the sequence is EPEKPVADSETKM.

It belongs to the dicarboxylate/amino acid:cation symporter (DAACS) (TC 2.A.23) family. SLC1A3 subfamily. In terms of assembly, homotrimer. Glycosylated. Detected in brain, in Bergmann glia arborising into the molecular layer of the cerebellum (at protein level). Localized in brain and is highly enriched in the Purkinje cell layer in cerebellum. Intermediate level in lung, low level in spleen, skeletal muscle and testis.

It is found in the cell membrane. The catalysed reaction is K(+)(in) + L-glutamate(out) + 3 Na(+)(out) + H(+)(out) = K(+)(out) + L-glutamate(in) + 3 Na(+)(in) + H(+)(in). It carries out the reaction K(+)(in) + L-aspartate(out) + 3 Na(+)(out) + H(+)(out) = K(+)(out) + L-aspartate(in) + 3 Na(+)(in) + H(+)(in). It catalyses the reaction D-aspartate(out) + K(+)(in) + 3 Na(+)(out) + H(+)(out) = D-aspartate(in) + K(+)(out) + 3 Na(+)(in) + H(+)(in). In terms of biological role, sodium-dependent, high-affinity amino acid transporter that mediates the uptake of L-glutamate and also L-aspartate and D-aspartate. Functions as a symporter that transports one amino acid molecule together with two or three Na(+) ions and one proton, in parallel with the counter-transport of one K(+) ion. Plays a redundant role in the rapid removal of released glutamate from the synaptic cleft, which is essential for terminating the postsynaptic action of glutamate. In Mus musculus (Mouse), this protein is Excitatory amino acid transporter 1 (Slc1a3).